A 132-amino-acid chain; its full sequence is Ribosome-binding factor A (132 aa).

It belongs to the RbfA family. Monomer. Binds 30S ribosomal subunits, but not 50S ribosomal subunits or 70S ribosomes.

It is found in the cytoplasm. Its function is as follows. One of several proteins that assist in the late maturation steps of the functional core of the 30S ribosomal subunit. Associates with free 30S ribosomal subunits (but not with 30S subunits that are part of 70S ribosomes or polysomes). Required for efficient processing of 16S rRNA. May interact with the 5'-terminal helix region of 16S rRNA. This is Ribosome-binding factor A from Pseudomonas putida (strain GB-1).